The primary structure comprises 884 residues: Translation initiation factor IF-2 (884 aa).

The interval 93-288 (VNTPEAEQAK…KGKRKPSTLQ (196 aa)) is disordered. Residues 99-209 (EQAKAEEQAQ…KMAAENEGKW (111 aa)) are compositionally biased toward basic and acidic residues. Positions 216-229 (QTESADYHVTTSQH) are enriched in polar residues. The span at 231-246 (RAAEDENDAKVEGDRR) shows a compositional bias: basic and acidic residues. A compositionally biased stretch (basic residues) spans 247-261 (SRTRGGKATKQKKGN). Over residues 262-275 (KLSESKADREEARA) the composition is skewed to basic and acidic residues. The region spanning 383-552 (HRAPVVTIMG…LLQAEVLELK (170 aa)) is the tr-type G domain. The segment at 392-399 (GHVDHGKT) is G1. Residue 392 to 399 (GHVDHGKT) coordinates GTP. The segment at 417-421 (GITQH) is G2. Residues 438 to 441 (DTPG) form a G3 region. GTP contacts are provided by residues 438-442 (DTPGH) and 492-495 (NKID). The interval 492–495 (NKID) is G4. The interval 528-530 (SAK) is G5.

It belongs to the TRAFAC class translation factor GTPase superfamily. Classic translation factor GTPase family. IF-2 subfamily.

The protein resides in the cytoplasm. One of the essential components for the initiation of protein synthesis. Protects formylmethionyl-tRNA from spontaneous hydrolysis and promotes its binding to the 30S ribosomal subunits. Also involved in the hydrolysis of GTP during the formation of the 70S ribosomal complex. This chain is Translation initiation factor IF-2, found in Yersinia pestis bv. Antiqua (strain Antiqua).